Consider the following 97-residue polypeptide: Thiosulfate sulfurtransferase/rhodanese-like domain-containing protein 3 (97 aa).

The region spanning 32 to 84 (YKELKNLLNSKNIMLIDVREIWEILEYQKIPESINVPLDEVGEALQMNPRDFK) is the Rhodanese domain. At lysine 84 the chain carries N6-succinyllysine.

In Homo sapiens (Human), this protein is Thiosulfate sulfurtransferase/rhodanese-like domain-containing protein 3 (TSTD3).